A 195-amino-acid polypeptide reads, in one-letter code: Large ribosomal subunit protein bL25 (195 aa).

Belongs to the bacterial ribosomal protein bL25 family. CTC subfamily. In terms of assembly, part of the 50S ribosomal subunit; part of the 5S rRNA/L5/L18/L25 subcomplex. Contacts the 5S rRNA. Binds to the 5S rRNA independently of L5 and L18.

In terms of biological role, this is one of the proteins that binds to the 5S RNA in the ribosome where it forms part of the central protuberance. The sequence is that of Large ribosomal subunit protein bL25 from Chlorobium chlorochromatii (strain CaD3).